The chain runs to 526 residues: Peptide chain release factor 3 (526 aa).

One can recognise a tr-type G domain in the interval 9 to 277; that stretch reads ERRRTFAIIS…AFAEYAPPPQ (269 aa). Residues 18–25, 86–90, and 140–143 contribute to the GTP site; these read SHPDAGKT, DTPGH, and NKLD.

This sequence belongs to the TRAFAC class translation factor GTPase superfamily. Classic translation factor GTPase family. PrfC subfamily.

It is found in the cytoplasm. Its function is as follows. Increases the formation of ribosomal termination complexes and stimulates activities of RF-1 and RF-2. It binds guanine nucleotides and has strong preference for UGA stop codons. It may interact directly with the ribosome. The stimulation of RF-1 and RF-2 is significantly reduced by GTP and GDP, but not by GMP. The polypeptide is Peptide chain release factor 3 (Methylococcus capsulatus (strain ATCC 33009 / NCIMB 11132 / Bath)).